Here is a 274-residue protein sequence, read N- to C-terminus: tRNA pseudouridine synthase A (274 aa).

The Nucleophile role is filled by aspartate 51. Residue tyrosine 109 participates in substrate binding.

This sequence belongs to the tRNA pseudouridine synthase TruA family. Homodimer.

It catalyses the reaction uridine(38/39/40) in tRNA = pseudouridine(38/39/40) in tRNA. In terms of biological role, formation of pseudouridine at positions 38, 39 and 40 in the anticodon stem and loop of transfer RNAs. The chain is tRNA pseudouridine synthase A from Acidovorax sp. (strain JS42).